The following is a 201-amino-acid chain: 3-isopropylmalate dehydratase small subunit (201 aa).

This sequence belongs to the LeuD family. LeuD type 1 subfamily. In terms of assembly, heterodimer of LeuC and LeuD.

It catalyses the reaction (2R,3S)-3-isopropylmalate = (2S)-2-isopropylmalate. Its pathway is amino-acid biosynthesis; L-leucine biosynthesis; L-leucine from 3-methyl-2-oxobutanoate: step 2/4. In terms of biological role, catalyzes the isomerization between 2-isopropylmalate and 3-isopropylmalate, via the formation of 2-isopropylmaleate. This Agrobacterium fabrum (strain C58 / ATCC 33970) (Agrobacterium tumefaciens (strain C58)) protein is 3-isopropylmalate dehydratase small subunit.